The primary structure comprises 776 residues: Systemic RNA interference defective protein 1 (776 aa).

An N-terminal signal peptide occupies residues 1–17; that stretch reads MIRVYLIILMHLVIGLT. The Extracellular segment spans residues 18–319; that stretch reads QNNSTTPSPI…ENQSYAVPTA (302 aa). Asparagine 19, asparagine 20, asparagine 32, asparagine 205, asparagine 210, asparagine 234, asparagine 290, and asparagine 311 each carry an N-linked (GlcNAc...) asparagine glycan. An involved in dsRNA-binding region spans residues 22 to 312; that stretch reads TTPSPIITSS…SFEFKKLENQ (291 aa). A helical transmembrane segment spans residues 320–340; sequence LMMIFLTTPCLLFLPIVINII. The Cytoplasmic segment spans residues 341-429; it reads KNSRKLAPSQ…KQDSLSLHGQ (89 aa). The segment at 360 to 390 is disordered; the sequence is PSEQRDMDLSHDEQQNTSSELENNGEIPAAE. A compositionally biased stretch (basic and acidic residues) spans 362–373; that stretch reads EQRDMDLSHDEQ. The chain crosses the membrane as a helical span at residues 430 to 450; the sequence is MLQYPVAIILPVLMHTAIEFH. The Extracellular portion of the chain corresponds to 451-481; it reads KWTTSTMANRDEMCFHNHACARPLGELRAWN. The chain crosses the membrane as a helical span at residues 482–502; it reads NIITNIGYTLYGAIFIVLSIC. Topologically, residues 503–510 are cytoplasmic; that stretch reads RRGRHEYS. The chain crosses the membrane as a helical span at residues 511–531; it reads HVFGTYECTLLDVTIGVFMVL. The Extracellular segment spans residues 532-543; it reads QSIASATYHICP. The helical transmembrane segment at 544 to 564 threads the bilayer; sequence SDVAFQFDTPCIQVICGLLMV. Residues 565–575 lie on the Cytoplasmic side of the membrane; the sequence is RQWFVRHESPS. Residues 576–596 form a helical membrane-spanning segment; the sequence is PAYTNILLVGVVSLNFLISAF. The Extracellular portion of the chain corresponds to 597–599; sequence SKT. The chain crosses the membrane as a helical span at residues 600 to 620; it reads SYVRFIIAVIHVIVVGSICLA. Topologically, residues 621 to 633 are cytoplasmic; the sequence is KERSLGSEKLKTR. A helical transmembrane segment spans residues 634–654; the sequence is FFIMAFSMGNFAAIVMYLTLS. The Extracellular portion of the chain corresponds to 655–659; that stretch reads AFHLN. A helical membrane pass occupies residues 660-680; sequence QIATYCFIINCIMYLMYYGCM. At 681-691 the chain is on the cytoplasmic side; the sequence is KVLHSERITSK. A helical membrane pass occupies residues 692–712; sequence AKLCGALSLLAWAVAGFFFFQ. At 713-741 the chain is on the extracellular side; the sequence is DDTDWTRSAAASRALNKPCLLLGFFGSHD. Residues 742 to 762 form a helical membrane-spanning segment; that stretch reads LWHIFGALAGLFTFIFVSFVD. The Cytoplasmic segment spans residues 763–776; that stretch reads DDLINTRKTSINIF.

This sequence belongs to the SID1 family. In terms of assembly, may self-associate to form multimers. As to expression, expressed in most non-neuronal cells, including body wall muscle cells.

It is found in the cell membrane. In terms of biological role, plays a role in RNA-mediated gene silencing by acting cell-autonomously as a channel for the transport of double-stranded RNA (dsRNA) between cells. Mediates the spread of dsRNA and subsequent silencing of genes in cells distant from the site of dsRNA introduction. Selective for dsRNA. Preferentially binds long dsRNA, from 50 base pairs up to 700. Short 20 base-pair long molecules are not bound. May also bind dsDNA, but with lower affinity. Binding may be sequence-independent. Required for avoidance behavior induced by small RNAs derived from pathogenic bacteria such as P.aeruginosa. The polypeptide is Systemic RNA interference defective protein 1 (Caenorhabditis elegans).